A 227-amino-acid polypeptide reads, in one-letter code: Type II restriction enzyme HhaII (227 aa).

As to quaternary structure, homodimer.

It carries out the reaction Endonucleolytic cleavage of DNA to give specific double-stranded fragments with terminal 5'-phosphates.. Its function is as follows. A P subtype restriction enzyme that recognizes the double-stranded sequence 5'-GANTC-3' and cleaves after G-1. This chain is Type II restriction enzyme HhaII (hhaIIR), found in Haemophilus parahaemolyticus.